A 114-amino-acid chain; its full sequence is UPF0102 protein jhp_0762 (114 aa).

Belongs to the UPF0102 family.

The chain is UPF0102 protein jhp_0762 from Helicobacter pylori (strain J99 / ATCC 700824) (Campylobacter pylori J99).